A 276-amino-acid chain; its full sequence is MKGQILREMKVLNAIDPAFEVQRRVAFIKTKLKQSNTQSLVLGISGGVDSSLAGRLCQLAVDEINADTDGSGYQFIAVRLPYDIQKDEDEAQLACQFIKPSKQVTVNVKDGVNGIHSETLSAIEMAGIVLPDNTNIDFVKGNVKARMRMVAQYEIAGLVAGLVVGTDHSAENITGFYTKWGDGACDLAPLFGLNKRQVRTLAHFLGAPDILVNKAPTADLEEGQPQLEDEIALGLTYDQIDDFLEGKEVSEAVNDRLVSIYRATQHKRDAIPTIYD.

43 to 50 (GISGGVDS) is a binding site for ATP. Residue Asp49 coordinates Mg(2+). Residue Arg146 coordinates deamido-NAD(+). Thr166 serves as a coordination point for ATP. Mg(2+) is bound at residue Glu171. 2 residues coordinate deamido-NAD(+): Lys179 and Asp186. ATP contacts are provided by Lys195 and Thr217. Position 266 to 267 (266 to 267 (HK)) interacts with deamido-NAD(+).

It belongs to the NAD synthetase family. In terms of assembly, homodimer.

It carries out the reaction deamido-NAD(+) + NH4(+) + ATP = AMP + diphosphate + NAD(+) + H(+). It participates in cofactor biosynthesis; NAD(+) biosynthesis; NAD(+) from deamido-NAD(+) (ammonia route): step 1/1. Catalyzes the ATP-dependent amidation of deamido-NAD to form NAD. Uses ammonia as a nitrogen source. The chain is NH(3)-dependent NAD(+) synthetase from Shewanella piezotolerans (strain WP3 / JCM 13877).